Consider the following 489-residue polypeptide: Cytochrome P450 monooxygenase prhB (489 aa).

The next 3 helical transmembrane spans lie at 1-21, 212-232, and 287-307; these read MFSF…KVIY, VIFQ…MIFA, and LFIG…AYLL. Residues asparagine 347 and asparagine 379 are each glycosylated (N-linked (GlcNAc...) asparagine). Cysteine 431 is a binding site for heme.

This sequence belongs to the cytochrome P450 family. The cofactor is heme.

The protein resides in the membrane. It participates in secondary metabolite biosynthesis; terpenoid biosynthesis. Cytochrome P450 monooxygenase; part of the gene cluster that mediates the biosynthesis of paraherquonin, a meroterpenoid with a unique, highly congested hexacyclic molecular architecture. The first step of the pathway is the synthesis of 3,5-dimethylorsellinic acid (DMOA) by the polyketide synthase prhL. Synthesis of DMOA is followed by farnesylation by the prenyltransferase prhE, methylesterification by the methyl-transferase prhM, epoxidation of the prenyl chain by the flavin-dependent monooxygenase prhF, and cyclization of the farnesyl moiety by the terpene cyclase prhH, to yield the tetracyclic intermediate, protoaustinoid A. The short chain dehydrogenase prhI then oxidizes the C-3 alcohol group of the terpene cyclase product to transform protoaustinoid A into protoaustinoid B. The FAD-binding monooxygenase prhJ catalyzes the oxidation of protoaustinoid B into preaustinoid A which is further oxidized into preaustinoid A1 by FAD-binding monooxygenase phrK. Finally, prhA leads to berkeleydione via the berkeleyone B intermediate. PrhA is a multifunctional dioxygenase that first desaturates at C5-C6 to form berkeleyone B, followed by rearrangement of the A/B-ring to form the cycloheptadiene moiety in berkeleydione. Berkeleydione serves as the key intermediate for the biosynthesis of paraherquonin as well as many other meroterpenoids. The cytochrome P450 monooxygenases prhB, prhD, and prhN, as well as the isomerase prhC, are probably involved in the late stage of paraherquonin biosynthesis, after the production of berkeleydione. Especially prhC might be a multifunctional enzyme that catalyzes the D-ring expansion via intramolecular methoxy rearrangement, as well as the hydrolysis of the expanded D-ring. The chain is Cytochrome P450 monooxygenase prhB from Penicillium brasilianum.